Here is a 157-residue protein sequence, read N- to C-terminus: Protein Smg (157 aa).

The protein belongs to the Smg family.

In Shigella boydii serotype 4 (strain Sb227), this protein is Protein Smg.